The sequence spans 244 residues: tRNA (guanine-N(7)-)-methyltransferase (244 aa).

Positions 1–20 are disordered; it reads MTNPFDSAGSKAPPKPFTVS. 4 residues coordinate S-adenosyl-L-methionine: Glu-75, Glu-100, Asp-127, and Asp-150. Asp-150 is an active-site residue. Residue Lys-154 coordinates substrate. The segment at 156–161 is interaction with RNA; it reads RHNKRR. Substrate-binding positions include Asp-186 and 223-226; that span reads THFE.

This sequence belongs to the class I-like SAM-binding methyltransferase superfamily. TrmB family.

The catalysed reaction is guanosine(46) in tRNA + S-adenosyl-L-methionine = N(7)-methylguanosine(46) in tRNA + S-adenosyl-L-homocysteine. Its pathway is tRNA modification; N(7)-methylguanine-tRNA biosynthesis. Its function is as follows. Catalyzes the formation of N(7)-methylguanine at position 46 (m7G46) in tRNA. The sequence is that of tRNA (guanine-N(7)-)-methyltransferase from Stenotrophomonas maltophilia (strain K279a).